The chain runs to 156 residues: C-type lectin lectoxin-Phi1 (156 aa).

The first 23 residues, 1–23, serve as a signal peptide directing secretion; sequence MGRFIFVSLGLLVLAFSLSGIGA. Intrachain disulfides connect C27/C38, C55/C154, and C129/C146. Residues 34-155 form the C-type lectin domain; sequence HNVSCYKLIN…CNRRHRFLCK (122 aa). N-linked (GlcNAc...) asparagine glycosylation is found at N35 and N109. Positions 119–121 match the Mannose-binding motif; it reads EPN. Residues E127, N142, and D143 each coordinate Ca(2+).

Belongs to the true venom lectin family. In terms of tissue distribution, expressed by the venom gland.

Its subcellular location is the secreted. In terms of biological role, mannose-binding lectin which recognizes specific carbohydrate structures and agglutinates a variety of animal cells by binding to cell-surface glycoproteins and glycolipids. May be a calcium-dependent lectin. The sequence is that of C-type lectin lectoxin-Phi1 from Philodryas olfersii (Green snake).